Consider the following 434-residue polypeptide: Bestrophin homolog 12 (434 aa).

A run of 4 helical transmembrane segments spans residues 31 to 51 (KVILHEFLMTAGAYFGVFLVF), 76 to 96 (VCIPMQMMLAFFIATVADQWE), 244 to 264 (IPIPLAYPQAVFLAVRIYFFF), and 278 to 298 (WALSHWGFPLLTTLQFIFLVG).

It belongs to the anion channel-forming bestrophin (TC 1.A.46) family. Calcium-sensitive chloride channel subfamily. As to quaternary structure, forms oligomers.

The protein resides in the cell membrane. In terms of biological role, forms chloride channels. This is Bestrophin homolog 12 (best-12) from Caenorhabditis elegans.